We begin with the raw amino-acid sequence, 451 residues long: DNA double-strand break repair nuclease NurA (451 aa).

Mn(2+)-binding residues include aspartate 51 and aspartate 126.

Belongs to the NurA family. In terms of assembly, homodimer. Interacts with HerA. The cofactor is Mn(2+).

Its activity is regulated as follows. Exonuclease activity is stimulated in the presence of HerA. Its function is as follows. Involved in DNA double-strand break (DSB) repair. Probably acts with HerA to stimulate resection of the 5' strand and produce the long 3' single-strand that is required for RadA loading. Exhibits 5' endonuclease activity and both 5' and 3' exonuclease activities. This Pyrococcus furiosus (strain ATCC 43587 / DSM 3638 / JCM 8422 / Vc1) protein is DNA double-strand break repair nuclease NurA.